The chain runs to 155 residues: Protein-export protein SecB (155 aa).

Belongs to the SecB family. In terms of assembly, homotetramer, a dimer of dimers. One homotetramer interacts with 1 SecA dimer.

The protein resides in the cytoplasm. Its function is as follows. One of the proteins required for the normal export of preproteins out of the cell cytoplasm. It is a molecular chaperone that binds to a subset of precursor proteins, maintaining them in a translocation-competent state. It also specifically binds to its receptor SecA. This chain is Protein-export protein SecB, found in Methylococcus capsulatus (strain ATCC 33009 / NCIMB 11132 / Bath).